A 454-amino-acid polypeptide reads, in one-letter code: MSTFRQEDVEDHYEMGEELGSGQFAIVRKCRQKGTGKEYAAKFIKKRRLSSSRRGVSREEIEREVNILREIRHPNIITLHDIFENKTDVVLILELVSGGELFDFLAEKESLTEDEATQFLKQILDGVHYLHSKRIAHFDLKPENIMLLDKNVPNPRIKLIDFGIAHKIEAGNEFKNIFGTPEFVAPEIVNYEPLGLEADMWSIGVITYILLSGASPFLGETKQETLTNISAVNYDFDEEYFSNTSELAKDFIRRLLVKDPKRRMTIAQSLEHSWIKAIRRRNVRGEDSGRKPERRRLKTTRLKEYTIKSHSSLPPNNSYADFERFSKVLEEAAAAEEGLRELQRSRRLCHEDVEALAAIYEEKEAWYREESDSLGQDLRRLRQELLKTEALKRQAQEEAKGALLGTSGLKRRFSRLENRYEALAKQVASEMRFVQDLVRALEQEKLQGVECGLR.

In terms of domain architecture, Protein kinase spans 13-275; that stretch reads YEMGEELGSG…IAQSLEHSWI (263 aa). ATP-binding positions include 19-27 and lysine 42; that span reads LGSGQFAIV. Serine 50 bears the Phosphoserine; by autocatalysis mark. Pyridone 6 is bound by residues glutamate 94 and valine 96. Residue aspartate 139 is the Proton acceptor of the active site. An activation segment region spans residues 161–204; it reads DFGIAHKIEAGNEFKNIFGTPEFVAPEIVNYEPLGLEADMWSIG. 2 positions are modified to phosphothreonine: threonine 180 and threonine 225. Threonine 265 bears the Phosphothreonine; by autocatalysis and ROCK1 mark. Threonine 299 is modified (phosphothreonine; by autocatalysis, DAPK1 and ROCK1). Threonine 306 carries the post-translational modification Phosphothreonine; by autocatalysis. Serine 309 carries the phosphoserine; by DAPK1 modification. Position 311 is a phosphoserine; by autocatalysis and DAPK1 (serine 311). A phosphoserine; by DAPK1 mark is found at serine 312, serine 318, and serine 326. Residues 427 to 441 are leucine-zipper; that stretch reads VASEMRFVQDLVRAL.

It belongs to the protein kinase superfamily. CAMK Ser/Thr protein kinase family. DAP kinase subfamily. As to quaternary structure, homooligomer in its kinase-active form (homotrimers and homodimers are reported); monomeric in its kinase-inactive form. Homodimerization is required for activation segment autophosphorylation. Isoform 1 and isoform 2 interact with myosin and PPP1R12A; interaction of isoform 1 with PPP1R12A is inhibited by RhoA dominant negative form. Interacts with NLK, DAXX, STAT3, RHOD (GTP-bound form) and TCP10L. Interacts with PAWR; the interaction is reported conflictingly: according to PubMed:17953487 does not interact with PAWR. Interacts with ULK1; may be a substrate of ULK1. Interacts with LUZP1; the interaction is likely to occur throughout the cell cycle and reduces the LUZP1-mediated suppression of MYL9 phosphorylation. Mg(2+) serves as cofactor. The phosphorylation status is critical for kinase activity, oligomerization and intracellular localization. Phosphorylation at Thr-180, Thr-225 and Thr-265 is essential for activity. The phosphorylated form is localized in the cytoplasm promoted by phosphorylation at Thr-299; nuclear translocation or retention is maximal when it is not phosphorylated. Phosphorylation increases the trimeric form, and its dephosphorylation favors a kinase-inactive monomeric form. Both isoform 1 and isoform 2 can undergo autophosphorylation. Widely expressed. Isoform 1 and isoform 2 are expressed in the bladder smooth muscle.

It is found in the nucleus. It localises to the PML body. Its subcellular location is the cytoplasm. The protein localises to the cytoskeleton. The protein resides in the microtubule organizing center. It is found in the centrosome. It localises to the chromosome. Its subcellular location is the centromere. The protein localises to the spindle. The protein resides in the midbody. It carries out the reaction L-seryl-[protein] + ATP = O-phospho-L-seryl-[protein] + ADP + H(+). The enzyme catalyses L-threonyl-[protein] + ATP = O-phospho-L-threonyl-[protein] + ADP + H(+). A sequential activation is proposed: autophosphorylation at consensus sites is leading to dimerization of the catalytic domain stabilized by phosphorylation at Ser-50 and activation segment exchange (producing an active confirmation of both kinase modules in trans) followed by phosphorylation at Thr-180 in the activation segment and at other regulatory sites. Phosphorylation at Thr-180, Thr-225 and Thr-265 is essential for activity. Oligomerization is required for full enzymatic activity. Inhibited by pyridone-6 (K00225), a potent, ATP-competitive inhibitor. Functionally, serine/threonine kinase which is involved in the regulation of apoptosis, autophagy, transcription, translation and actin cytoskeleton reorganization. Involved in the regulation of smooth muscle contraction. Regulates both type I (caspase-dependent) apoptotic and type II (caspase-independent) autophagic cell deaths signal, depending on the cellular setting. Involved in regulation of starvation-induced autophagy. Regulates myosin phosphorylation in both smooth muscle and non-muscle cells. In smooth muscle, regulates myosin either directly by phosphorylating MYL12B and MYL9 or through inhibition of smooth muscle myosin phosphatase (SMPP1M) via phosphorylation of PPP1R12A; the inhibition of SMPP1M functions to enhance muscle responsiveness to Ca(2+) and promote a contractile state. Phosphorylates MYL12B in non-muscle cells leading to reorganization of actin cytoskeleton. Isoform 2 can phosphorylate myosin, PPP1R12A and MYL12B. Overexpression leads to condensation of actin stress fibers into thick bundles. Involved in actin filament focal adhesion dynamics. The function in both reorganization of actin cytoskeleton and focal adhesion dissolution is modulated by RhoD. Positively regulates canonical Wnt/beta-catenin signaling through interaction with NLK and TCF7L2. Phosphorylates RPL13A on 'Ser-77' upon interferon-gamma activation which is causing RPL13A release from the ribosome, RPL13A association with the GAIT complex and its subsequent involvement in transcript-selective translation inhibition. Enhances transcription from AR-responsive promoters in a hormone- and kinase-dependent manner. Involved in regulation of cell cycle progression and cell proliferation. May be a tumor suppressor. This is Death-associated protein kinase 3 (DAPK3) from Homo sapiens (Human).